The chain runs to 312 residues: Glyoxylate/hydroxypyruvate reductase A (312 aa).

Arginine 227 is an active-site residue. Residue histidine 275 is the Proton donor of the active site.

It belongs to the D-isomer specific 2-hydroxyacid dehydrogenase family. GhrA subfamily.

The protein resides in the cytoplasm. It carries out the reaction glycolate + NADP(+) = glyoxylate + NADPH + H(+). It catalyses the reaction (R)-glycerate + NAD(+) = 3-hydroxypyruvate + NADH + H(+). The enzyme catalyses (R)-glycerate + NADP(+) = 3-hydroxypyruvate + NADPH + H(+). Its function is as follows. Catalyzes the NADPH-dependent reduction of glyoxylate and hydroxypyruvate into glycolate and glycerate, respectively. The polypeptide is Glyoxylate/hydroxypyruvate reductase A (Salmonella enteritidis PT4 (strain P125109)).